Here is a 100-residue protein sequence, read N- to C-terminus: NADH-quinone oxidoreductase subunit K 2 (100 aa).

The next 3 helical transmembrane spans lie at 4–24, 28–48, and 60–80; these read LWWH…GVLL, ILVV…NFIA, and IFAI…LGIL.

Belongs to the complex I subunit 4L family. In terms of assembly, NDH-1 is composed of 14 different subunits. Subunits NuoA, H, J, K, L, M, N constitute the membrane sector of the complex.

Its subcellular location is the cell inner membrane. It carries out the reaction a quinone + NADH + 5 H(+)(in) = a quinol + NAD(+) + 4 H(+)(out). In terms of biological role, NDH-1 shuttles electrons from NADH, via FMN and iron-sulfur (Fe-S) centers, to quinones in the respiratory chain. The immediate electron acceptor for the enzyme in this species is believed to be ubiquinone. Couples the redox reaction to proton translocation (for every two electrons transferred, four hydrogen ions are translocated across the cytoplasmic membrane), and thus conserves the redox energy in a proton gradient. This Sinorhizobium fredii (strain NBRC 101917 / NGR234) protein is NADH-quinone oxidoreductase subunit K 2.